We begin with the raw amino-acid sequence, 331 residues long: UBX domain-containing protein 2B (331 aa).

Disordered regions lie at residues 1-26 (MAEGGGAEPEEQERRSSRPRPPSARD) and 38-63 (EMKCKSSKPDRSTATAFKSPRTPPLR). Ala2 carries the N-acetylalanine modification. The span at 38–48 (EMKCKSSKPDR) shows a compositional bias: basic and acidic residues. Ser56 bears the Phosphoserine mark. Residue Thr59 is modified to Phosphothreonine. Ser66 carries the post-translational modification Phosphoserine. Residues 141-206 (DVQILLRLWS…MEDHQDQEYI (66 aa)) enclose the SEP domain. Phosphoserine is present on residues Ser231, Ser234, and Ser235. The region spanning 252 to 329 (DSVPTTKIQI…DILNTVILQQ (78 aa)) is the UBX domain.

It belongs to the NSFL1C family. In terms of assembly, interacts with VCP. Does not bind ubiquitin. Present at high level in brain. Also present in liver, kidney, spleen, testis, lung and heart (at protein level).

The protein resides in the nucleus. It is found in the cytoplasm. Its subcellular location is the cytosol. It localises to the endoplasmic reticulum. The protein localises to the golgi apparatus. The protein resides in the cytoskeleton. It is found in the microtubule organizing center. Its subcellular location is the centrosome. Its function is as follows. Adapter protein required for Golgi and endoplasmic reticulum biogenesis. Involved in Golgi and endoplasmic reticulum maintenance during interphase and in their reassembly at the end of mitosis. The complex formed with VCP has membrane fusion activity; membrane fusion activity requires USO1-GOLGA2 tethering and BET1L. VCPIP1 is also required, but not its deubiquitinating activity. Together with NSFL1C/p47, regulates the centrosomal levels of kinase AURKA/Aurora A during mitotic progression by promoting AURKA removal from centrosomes in prophase. Also, regulates spindle orientation during mitosis. In Rattus norvegicus (Rat), this protein is UBX domain-containing protein 2B (Ubxn2b).